Consider the following 310-residue polypeptide: Ribose-phosphate pyrophosphokinase (310 aa).

ATP contacts are provided by residues 33–35 (DGE) and 92–93 (RQ). Positions 127 and 166 each coordinate Mg(2+). K189 is an active-site residue. D-ribose 5-phosphate is bound by residues R191, D215, and 219-223 (DTAGT).

It belongs to the ribose-phosphate pyrophosphokinase family. Class I subfamily. As to quaternary structure, homohexamer. It depends on Mg(2+) as a cofactor.

The protein localises to the cytoplasm. It catalyses the reaction D-ribose 5-phosphate + ATP = 5-phospho-alpha-D-ribose 1-diphosphate + AMP + H(+). It participates in metabolic intermediate biosynthesis; 5-phospho-alpha-D-ribose 1-diphosphate biosynthesis; 5-phospho-alpha-D-ribose 1-diphosphate from D-ribose 5-phosphate (route I): step 1/1. Its function is as follows. Involved in the biosynthesis of the central metabolite phospho-alpha-D-ribosyl-1-pyrophosphate (PRPP) via the transfer of pyrophosphoryl group from ATP to 1-hydroxyl of ribose-5-phosphate (Rib-5-P). The polypeptide is Ribose-phosphate pyrophosphokinase (Bordetella pertussis (strain Tohama I / ATCC BAA-589 / NCTC 13251)).